The chain runs to 1064 residues: WD repeat-containing protein on Y chromosome (1064 aa).

WD repeat units lie at residues 153–197 (EEVT…IRTA), 326–365 (RVPL…EPSA), 369–408 (GHNG…LLQT), 459–498 (THAA…RKII), 511–550 (IIDI…VVRN), 598–638 (FHTD…RRYS), 746–785 (KTGD…EAEK), and 827–866 (AHLK…LGTL). The span at 914 to 924 (PAKRAEVKAPE) shows a compositional bias: basic and acidic residues. Disordered regions lie at residues 914-935 (PAKR…QTDD) and 1023-1064 (GSAL…QQSE). A compositionally biased stretch (acidic residues) spans 925-935 (DRDEETAQTDD).

This Drosophila pseudoobscura pseudoobscura (Fruit fly) protein is WD repeat-containing protein on Y chromosome.